Consider the following 156-residue polypeptide: Arginine repressor (156 aa).

The protein belongs to the ArgR family.

The protein localises to the cytoplasm. It functions in the pathway amino-acid biosynthesis; L-arginine biosynthesis [regulation]. Functionally, regulates arginine biosynthesis genes. In Photorhabdus laumondii subsp. laumondii (strain DSM 15139 / CIP 105565 / TT01) (Photorhabdus luminescens subsp. laumondii), this protein is Arginine repressor.